Reading from the N-terminus, the 560-residue chain is Putative transport protein ESA_02488 (560 aa).

The next 5 helical transmembrane spans lie at 8 to 28, 32 to 52, 66 to 86, 91 to 111, and 158 to 178; these read LLNG…LCLG, LGSV…LLGQ, FMLF…SIFF, NYLM…LGLG, and HLSL…IFGA. RCK C-terminal domains are found at residues 200-288 and 292-373; these read RGLD…SFRN and VFDR…RIGF. Transmembrane regions (helical) follow at residues 383-403, 406-426, 447-467, 475-495, and 539-559; these read LLAF…TFQF, FSFG…LGFL, FGLM…IGHG, MLFA…LFGA, and YAIA…IWPG.

Belongs to the AAE transporter (TC 2.A.81) family. YbjL subfamily.

The protein resides in the cell membrane. The protein is Putative transport protein ESA_02488 of Cronobacter sakazakii (strain ATCC BAA-894) (Enterobacter sakazakii).